We begin with the raw amino-acid sequence, 218 residues long: Thiopurine S-methyltransferase (218 aa).

S-adenosyl-L-methionine contacts are provided by tryptophan 10, leucine 45, glutamate 66, and arginine 123.

It belongs to the class I-like SAM-binding methyltransferase superfamily. TPMT family.

It is found in the cytoplasm. It catalyses the reaction S-adenosyl-L-methionine + a thiopurine = S-adenosyl-L-homocysteine + a thiopurine S-methylether.. In Shewanella sp. (strain W3-18-1), this protein is Thiopurine S-methyltransferase.